A 523-amino-acid chain; its full sequence is Glycine betaine transporter 1 (523 aa).

12 helical membrane-spanning segments follow: residues 33-53, 71-91, 109-129, 165-185, 214-234, 251-271, 286-306, 337-357, 372-392, 420-440, 467-487, and 496-516; these read VFGI…VLDA, FDWL…ALIV, SFMS…LMFW, FHWG…LAFF, IVDI…LGLG, GLGL…VSVV, MVVA…ASLG, WTVF…MFIA, VLIV…GLAI, VLPF…VFFI, VFWA…GGSE, and AIST…SLLM.

This sequence belongs to the BCCT transporter (TC 2.A.15) family.

Its subcellular location is the cell inner membrane. In terms of biological role, involved in the uptake of the osmoprotectant glycine betaine. The sequence is that of Glycine betaine transporter 1 from Vibrio parahaemolyticus serotype O3:K6 (strain RIMD 2210633).